The chain runs to 301 residues: Sulfate adenylyltransferase subunit 2 (301 aa).

This sequence belongs to the PAPS reductase family. CysD subfamily. As to quaternary structure, heterodimer composed of CysD, the smaller subunit, and CysN.

It carries out the reaction sulfate + ATP + H(+) = adenosine 5'-phosphosulfate + diphosphate. Its pathway is sulfur metabolism; hydrogen sulfide biosynthesis; sulfite from sulfate: step 1/3. Its function is as follows. With CysN forms the ATP sulfurylase (ATPS) that catalyzes the adenylation of sulfate producing adenosine 5'-phosphosulfate (APS) and diphosphate, the first enzymatic step in sulfur assimilation pathway. APS synthesis involves the formation of a high-energy phosphoric-sulfuric acid anhydride bond driven by GTP hydrolysis by CysN coupled to ATP hydrolysis by CysD. This is Sulfate adenylyltransferase subunit 2 from Citrifermentans bemidjiense (strain ATCC BAA-1014 / DSM 16622 / JCM 12645 / Bem) (Geobacter bemidjiensis).